A 251-amino-acid chain; its full sequence is Probable metal-binding protein YrpE (251 aa).

A signal peptide spans 1–30; the sequence is MNILFSKRLGILTIGSLLVLAGCQTSGSSA. A compositionally biased stretch (polar residues) spans 25-41; that stretch reads TSGSSAGESNQTTSSSA. A disordered region spans residues 25–72; the sequence is TSGSSAGESNQTTSSSAVEEDSSKTQEQTSDSHTHEHSHDHSHAHDEE. Over residues 54–72 the composition is skewed to basic and acidic residues; the sequence is SDSHTHEHSHDHSHAHDEE. Zn(2+) is bound by residues H203, H212, H214, E247, and H251.

Belongs to the calycin superfamily. ZinT family.

In Bacillus subtilis (strain 168), this protein is Probable metal-binding protein YrpE (yrpE).